The sequence spans 78 residues: RTX-VII (78 aa).

The N-terminal stretch at 1 to 22 (MKTIVYLIVSILLLSSTVLVLA) is a signal peptide. Positions 23–40 (EGNAASHELQEYPIEEQR) are excised as a propeptide. 4 cysteine pairs are disulfide-bonded: Cys42-Cys58, Cys47-Cys63, Cys57-Cys73, and Cys65-Cys71. An Arginine amide modification is found at Arg76.

Expressed by the venom gland.

The protein resides in the secreted. Agonist of rat Nav1.3/SCN3A. This toxin increases the peak current amplitude, and potently inhibits the fast inactivation of the channel (EC(50)=120 nM). The inhibition of fast inactivation is voltage-independent (depolarizing voltages ranging from 220 mV to 130 mV). The toxin might bind to the domain IV of the Nav1.3 channel, while domain II might not participate in interacting with the toxin but could determine the efficacy of RTX-VII. In vivo, when intracerebroventricularly injected into mice, the toxin causes involuntary body twitching (seizure-like symptoms). In Macrothele raveni (Funnel-web spider), this protein is RTX-VII.